We begin with the raw amino-acid sequence, 120 residues long: Large ribosomal subunit protein uL18 (120 aa).

This sequence belongs to the universal ribosomal protein uL18 family. Part of the 50S ribosomal subunit; part of the 5S rRNA/L5/L18/L25 subcomplex. Contacts the 5S and 23S rRNAs.

In terms of biological role, this is one of the proteins that bind and probably mediate the attachment of the 5S RNA into the large ribosomal subunit, where it forms part of the central protuberance. In Chloroflexus aggregans (strain MD-66 / DSM 9485), this protein is Large ribosomal subunit protein uL18.